The following is a 486-amino-acid chain: Fructose dehydrogenase cytochrome subunit (486 aa).

The first 25 residues, 1–25 (MRYFRPLSATAMTTVLLLAGTNVRA), serve as a signal peptide directing secretion. Cytochrome c domains are found at residues 38–142 (PSIS…MTEV), 186–294 (DDWN…RSVP), and 330–423 (TKTT…LSHF). Residues C52, C55, H56, C201, C204, H205, C343, C346, and H347 each coordinate heme c. Residues 458–478 (LLGTGGILGAILVVAGLWWLI) traverse the membrane as a helical segment.

Heterotrimer composed of FdhL, FdhS and FdhC. Post-translationally, binds 3 heme c groups covalently per subunit.

It is found in the cell membrane. Its function is as follows. Cytochrome subunit of fructose dehydrogenase, an enzyme that catalyzes the oxidation of D-fructose to produce 5-keto-D-fructose. In the complex, mediates both the electron transfer to ubiquinone and the anchoring of the complex to the membrane. In Gluconobacter japonicus, this protein is Fructose dehydrogenase cytochrome subunit (fdhC).